Consider the following 295-residue polypeptide: Pyrroline-5-carboxylate reductase (295 aa).

The protein belongs to the pyrroline-5-carboxylate reductase family.

It localises to the cytoplasm. It carries out the reaction L-proline + NADP(+) = (S)-1-pyrroline-5-carboxylate + NADPH + 2 H(+). The enzyme catalyses L-proline + NAD(+) = (S)-1-pyrroline-5-carboxylate + NADH + 2 H(+). The protein operates within amino-acid biosynthesis; L-proline biosynthesis; L-proline from L-glutamate 5-semialdehyde: step 1/1. In terms of biological role, catalyzes the reduction of 1-pyrroline-5-carboxylate (PCA) to L-proline. This chain is Pyrroline-5-carboxylate reductase, found in Mycobacterium tuberculosis (strain CDC 1551 / Oshkosh).